Here is a 386-residue protein sequence, read N- to C-terminus: Bifunctional enzyme IspD/IspF (386 aa).

The interval 1-225 is 2-C-methyl-D-erythritol 4-phosphate cytidylyltransferase; the sequence is MYNFVTLSIL…SCLSAPSSDT (225 aa). Positions 226–386 are 2-C-methyl-D-erythritol 2,4-cyclodiphosphate synthase; it reads LSGVGFDVHA…NLKYFDWTKI (161 aa). The a divalent metal cation site is built by D232 and H234. Residues 232 to 234 and 258 to 259 each bind 4-CDP-2-C-methyl-D-erythritol 2-phosphate; these read DVH and HS. An a divalent metal cation-binding site is contributed by H266. 4-CDP-2-C-methyl-D-erythritol 2-phosphate is bound by residues 280-282, 285-289, 356-359, F363, and R366; these read DIG, FPDND, and TTTE.

In the N-terminal section; belongs to the IspD/TarI cytidylyltransferase family. IspD subfamily. The protein in the C-terminal section; belongs to the IspF family. The cofactor is a divalent metal cation.

It carries out the reaction 2-C-methyl-D-erythritol 4-phosphate + CTP + H(+) = 4-CDP-2-C-methyl-D-erythritol + diphosphate. The catalysed reaction is 4-CDP-2-C-methyl-D-erythritol 2-phosphate = 2-C-methyl-D-erythritol 2,4-cyclic diphosphate + CMP. The protein operates within isoprenoid biosynthesis; isopentenyl diphosphate biosynthesis via DXP pathway; isopentenyl diphosphate from 1-deoxy-D-xylulose 5-phosphate: step 2/6. It functions in the pathway isoprenoid biosynthesis; isopentenyl diphosphate biosynthesis via DXP pathway; isopentenyl diphosphate from 1-deoxy-D-xylulose 5-phosphate: step 4/6. Functionally, bifunctional enzyme that catalyzes the formation of 4-diphosphocytidyl-2-C-methyl-D-erythritol from CTP and 2-C-methyl-D-erythritol 4-phosphate (MEP) (IspD), and catalyzes the conversion of 4-diphosphocytidyl-2-C-methyl-D-erythritol 2-phosphate (CDP-ME2P) to 2-C-methyl-D-erythritol 2,4-cyclodiphosphate (ME-CPP) with a corresponding release of cytidine 5-monophosphate (CMP) (IspF). The polypeptide is Bifunctional enzyme IspD/IspF (Sulfurimonas denitrificans (strain ATCC 33889 / DSM 1251) (Thiomicrospira denitrificans (strain ATCC 33889 / DSM 1251))).